We begin with the raw amino-acid sequence, 368 residues long: 3-dehydroquinate synthase (368 aa).

NAD(+)-binding positions include 80 to 85 (DAESAK), 114 to 118 (GAATD), 138 to 139 (TT), K151, and K160. The Zn(2+) site is built by E193, H255, and H271.

This sequence belongs to the sugar phosphate cyclases superfamily. Dehydroquinate synthase family. The cofactor is Co(2+). Requires Zn(2+) as cofactor. It depends on NAD(+) as a cofactor.

Its subcellular location is the cytoplasm. The catalysed reaction is 7-phospho-2-dehydro-3-deoxy-D-arabino-heptonate = 3-dehydroquinate + phosphate. Its pathway is metabolic intermediate biosynthesis; chorismate biosynthesis; chorismate from D-erythrose 4-phosphate and phosphoenolpyruvate: step 2/7. Functionally, catalyzes the conversion of 3-deoxy-D-arabino-heptulosonate 7-phosphate (DAHP) to dehydroquinate (DHQ). This is 3-dehydroquinate synthase from Corynebacterium jeikeium (strain K411).